Here is a 349-residue protein sequence, read N- to C-terminus: Protein-glutamate methylesterase/protein-glutamine glutaminase (349 aa).

The Response regulatory domain occupies 5–122 (RVLSVDDSAL…REGMLAYSEM (118 aa)). Asp-56 carries the 4-aspartylphosphate modification. The CheB-type methylesterase domain occupies 152–344 (LLSSEKLIAI…QQMLAKISAG (193 aa)). Catalysis depends on residues Ser-164, His-190, and Asp-286.

It belongs to the CheB family. Phosphorylated by CheA. Phosphorylation of the N-terminal regulatory domain activates the methylesterase activity.

Its subcellular location is the cytoplasm. The catalysed reaction is [protein]-L-glutamate 5-O-methyl ester + H2O = L-glutamyl-[protein] + methanol + H(+). It catalyses the reaction L-glutaminyl-[protein] + H2O = L-glutamyl-[protein] + NH4(+). Its function is as follows. Involved in chemotaxis. Part of a chemotaxis signal transduction system that modulates chemotaxis in response to various stimuli. Catalyzes the demethylation of specific methylglutamate residues introduced into the chemoreceptors (methyl-accepting chemotaxis proteins or MCP) by CheR. Also mediates the irreversible deamidation of specific glutamine residues to glutamic acid. In Escherichia coli O6:H1 (strain CFT073 / ATCC 700928 / UPEC), this protein is Protein-glutamate methylesterase/protein-glutamine glutaminase.